Here is a 271-residue protein sequence, read N- to C-terminus: Aquaporin-2 (271 aa).

The Cytoplasmic segment spans residues 1 to 11 (MWELRSIAFSR). The chain crosses the membrane as a helical span at residues 12-32 (AVFAEFLATLLFVFFGLGSAL). Residues 33–40 (NWPQALPS) are Extracellular-facing. A helical membrane pass occupies residues 41–59 (VLQIAMAFGLGIGTLVQAL). Residues 60–64 (GHISG) lie on the Cytoplasmic side of the membrane. Residues 65–74 (AHINPAVTVA) constitute an intramembrane region (discontinuously helical). The NPA 1 signature appears at 68–70 (NPA). The Cytoplasmic segment spans residues 75 to 85 (CLVGCHVSVLR). Residues 86–107 (AAFYVAAQLLGAVAGAALLHEI) traverse the membrane as a helical segment. Residues 108-127 (TPADIRGDLAVNALSNSTTA) lie on the Extracellular side of the membrane. N123 carries N-linked (GlcNAc...) asparagine glycosylation. The helical transmembrane segment at 128-148 (GQAVTVELFLTLQLVLCIFAS) threads the bilayer. Topologically, residues 149 to 156 (TDERRGEN) are cytoplasmic. A helical membrane pass occupies residues 157–176 (PGTPALSIGFSVALGHLLGI). At 177-180 (HYTG) the chain is on the extracellular side. Positions 181-193 (CSMNPARSLAPAV) form an intramembrane region, discontinuously helical. Residues 184–186 (NPA) carry the NPA 2 motif. Residues 194–201 (VTGKFDDH) are Extracellular-facing. Residues 202 to 222 (WVFWIGPLVGAILGSLLYNYV) form a helical membrane-spanning segment. The Cytoplasmic segment spans residues 223–271 (LFPPAKSLSERLAVLKGLEPDTDWEEREVRRRQSVELHSPQSLPRGTKA). The disordered stretch occupies residues 248–271 (EREVRRRQSVELHSPQSLPRGTKA). A Phosphoserine; by PKA modification is found at S256. Over residues 261–271 (SPQSLPRGTKA) the composition is skewed to polar residues.

The protein belongs to the MIP/aquaporin (TC 1.A.8) family. In terms of assembly, homotetramer. Interacts with micropeptide MIAC; the interaction leads to a reduction of filamentous actin fibers and inhibition of the EREG/EGFR signaling pathway. In terms of processing, ser-256 phosphorylation is necessary and sufficient for expression at the apical membrane. Endocytosis is not phosphorylation-dependent. Post-translationally, N-glycosylated. In terms of tissue distribution, expressed in collecting tubules in kidney medulla (at protein level). Detected in kidney.

It is found in the apical cell membrane. Its subcellular location is the basolateral cell membrane. It localises to the cell membrane. The protein localises to the cytoplasmic vesicle membrane. The protein resides in the golgi apparatus. It is found in the trans-Golgi network membrane. It carries out the reaction H2O(in) = H2O(out). The catalysed reaction is glycerol(in) = glycerol(out). Forms a water-specific channel that provides the plasma membranes of renal collecting duct with high permeability to water, thereby permitting water to move in the direction of an osmotic gradient. Plays an essential role in renal water homeostasis. Could also be permeable to glycerol. The polypeptide is Aquaporin-2 (Homo sapiens (Human)).